The chain runs to 279 residues: Acetyl-coenzyme A carboxylase carboxyl transferase subunit beta (279 aa).

The CoA carboxyltransferase N-terminal domain maps to 23–279 (MWWKCDECGA…IVRLMTMLAP (257 aa)). Residues Cys27, Cys30, Cys46, and Cys49 each coordinate Zn(2+). The segment at 27-49 (CDECGAMLHKKQLEDNFYTCSEC) adopts a C4-type zinc-finger fold.

Belongs to the AccD/PCCB family. As to quaternary structure, acetyl-CoA carboxylase is a heterohexamer composed of biotin carboxyl carrier protein (AccB), biotin carboxylase (AccC) and two subunits each of ACCase subunit alpha (AccA) and ACCase subunit beta (AccD). Zn(2+) is required as a cofactor.

Its subcellular location is the cytoplasm. The enzyme catalyses N(6)-carboxybiotinyl-L-lysyl-[protein] + acetyl-CoA = N(6)-biotinyl-L-lysyl-[protein] + malonyl-CoA. Its pathway is lipid metabolism; malonyl-CoA biosynthesis; malonyl-CoA from acetyl-CoA: step 1/1. Functionally, component of the acetyl coenzyme A carboxylase (ACC) complex. Biotin carboxylase (BC) catalyzes the carboxylation of biotin on its carrier protein (BCCP) and then the CO(2) group is transferred by the transcarboxylase to acetyl-CoA to form malonyl-CoA. The polypeptide is Acetyl-coenzyme A carboxylase carboxyl transferase subunit beta (Chlorobium phaeobacteroides (strain DSM 266 / SMG 266 / 2430)).